The following is a 287-amino-acid chain: Probable endonuclease 4 (287 aa).

Zn(2+) contacts are provided by H69, H109, E144, D178, H181, H215, D228, H230, and E260.

The protein belongs to the AP endonuclease 2 family. Zn(2+) serves as cofactor.

The enzyme catalyses Endonucleolytic cleavage to 5'-phosphooligonucleotide end-products.. Its function is as follows. Endonuclease IV plays a role in DNA repair. It cleaves phosphodiester bonds at apurinic or apyrimidinic (AP) sites, generating a 3'-hydroxyl group and a 5'-terminal sugar phosphate. The protein is Probable endonuclease 4 of Thermotoga neapolitana (strain ATCC 49049 / DSM 4359 / NBRC 107923 / NS-E).